Here is a 683-residue protein sequence, read N- to C-terminus: UvrABC system protein B (683 aa).

The Helicase ATP-binding domain occupies 31–414 (AGFEKGYKEQ…ELERTDHKVE (384 aa)). 44 to 51 (GATGTGKT) contacts ATP. The short motif at 97-120 (YYDYYQPEAYVPQSDTYIEKDSAI) is the Beta-hairpin element. In terms of domain architecture, Helicase C-terminal spans 435–601 (QIDDLVGEIN…TIIKPVHDVI (167 aa)). The UVR domain maps to 632 to 667 (KTMIKNLQEQMKEAAKKLDFEEAANLRDAIMELQSS). A disordered region spans residues 662–683 (MELQSSSRRPKTRKGKALNGKR). A compositionally biased stretch (basic residues) spans 669 to 683 (RRPKTRKGKALNGKR).

The protein belongs to the UvrB family. As to quaternary structure, forms a heterotetramer with UvrA during the search for lesions. Interacts with UvrC in an incision complex.

The protein localises to the cytoplasm. Its function is as follows. The UvrABC repair system catalyzes the recognition and processing of DNA lesions. A damage recognition complex composed of 2 UvrA and 2 UvrB subunits scans DNA for abnormalities. Upon binding of the UvrA(2)B(2) complex to a putative damaged site, the DNA wraps around one UvrB monomer. DNA wrap is dependent on ATP binding by UvrB and probably causes local melting of the DNA helix, facilitating insertion of UvrB beta-hairpin between the DNA strands. Then UvrB probes one DNA strand for the presence of a lesion. If a lesion is found the UvrA subunits dissociate and the UvrB-DNA preincision complex is formed. This complex is subsequently bound by UvrC and the second UvrB is released. If no lesion is found, the DNA wraps around the other UvrB subunit that will check the other stand for damage. The polypeptide is UvrABC system protein B (Lactobacillus acidophilus (strain ATCC 700396 / NCK56 / N2 / NCFM)).